We begin with the raw amino-acid sequence, 837 residues long: MNDPSLLGYPNVGPQQQQQQQQQQHAGLLGKGTPNALQQQLHMNQLTGIPPPGLMNNSDVHTSSNNNSRQLLDQLANGNANMLNMNMDNNNNNNNNNNNNNNNGGGSGVMMNASTAAVNSIGMVPTVGTPVNINVNASNPLLHPHLDDPSLLNNPIWKLQLHLAAVSAQSLGQPNIYARQNAMKKYLATQQAQQAQQQAQQQAQQQVPGPFGPGPQAAPPALQPTDFQQSHIAEASKSLVDCTKQALMEMADTLTDSKTAKKQQPTGDSTPSGTATNSAVSTPLTPKIELFANGKDEANQALLQHKKLSQYSIDEDDDIENRMVMPKDSKYDDQLWHALDLSNLQIFNISANIFKYDFLTRLYLNGNSLTELPAEIKNLSNLRVLDLSHNRLTSLPAELGSCFQLKYFYFFDNMVTTLPWEFGNLCNLQFLGVEGNPLEKQFLKILTEKSVTGLIFYLRDNRPEIPLPHERRFIEINTDGEPQREYDSLQQSTEHLATDLAKRTFTVLSYNTLCQHYATPKMYRYTPSWALSWDYRRNKLKEQILSYDSDLLCLQEVESKTFEEYWVPLLDKHGYTGIFHAKARAKTMHSKDSKKVDGCCIFFKRDQFKLITKDAMDFSGAWMKHKKFQRTEDYLNRAMNKDNVALFLKLQHIPSGDTIWAVTTHLHWDPKFNDVKTFQVGVLLDHLETLLKEETSHNFRQDIKKFPVLICGDFNSYINSAVYELINTGRVQIHQEGNGRDFGYMSEKNFSHNLALKSSYNCIGELPFTNFTPSFTDVIDYIWFSTHALRVRGLLGEVDPEYVSKFIGFPNDKFPSDHIPLLARFEFMKTNTGSKKV.

The interval Met1–Gly32 is disordered. The segment covering Gln15–Gln24 has biased composition (low complexity). A Phosphothreonine modification is found at Thr33. Disordered stretches follow at residues Leu46 to Asn66, Asn81 to Ser107, Gln197 to Gln223, and Leu254 to Ser281. Residues Met55–Asn66 are compositionally biased toward polar residues. Low complexity-rich tracts occupy residues Asn81–Asn102 and Gln197–Gly209. The span at Pro210–Leu222 shows a compositional bias: pro residues. Residue Ser278 is modified to Phosphoserine. The residue at position 285 (Thr285) is a Phosphothreonine. 5 LRR repeats span residues Gln334–Tyr356, Phe358–Leu379, Asn381–Cys402, Gln404–Cys426, and Asn427–Thr447. Position 556 (Glu556) interacts with Mg(2+).

This sequence belongs to the CCR4/nocturin family. In terms of assembly, subunit of the 1.0 MDa CCR4-NOT core complex that contains CCR4, CAF1, NOT1, NOT2, NOT3, NOT4, NOT5, CAF40 and CAF130. In the complex interacts with NOT1. The core complex probably is part of a less characterized 1.9 MDa CCR4-NOT complex. The cofactor is Mg(2+).

The protein localises to the cytoplasm. The protein resides in the nucleus. The catalysed reaction is Exonucleolytic cleavage of poly(A) to 5'-AMP.. Acts as a catalytic component of the CCR4-NOT core complex, which in the nucleus seems to be a general transcription factor, and in the cytoplasm the major mRNA deadenylase involved in mRNA turnover. CCR4 has 3'-5' RNase activity with a strong preference for polyadenylated substrates and also low exonuclease activity towards single-stranded DNA. Discovered because of its role in the control of ADH2 gene expression. It is required for the expression of genes involved in non-fermentative growth and it mediates or is required for the action of the SPT6 and SPT10 genes. In Saccharomyces cerevisiae (strain ATCC 204508 / S288c) (Baker's yeast), this protein is CCR4-Not complex 3'-5'-exoribonuclease subunit Ccr4 (CCR4).